The primary structure comprises 419 residues: Protein indeterminate-domain 14 (419 aa).

The interval 1-58 (MIDYERSNTTKNINTHHHNPPPSSSSSDLLPDGNGTAVTQKRKRRPAGTPDPEAEVVS) is disordered. 3 consecutive C2H2-type zinc fingers follow at residues 70–92 (YVCEICNQGFQRDQNLQMHRRRH), 112–142 (YVCPEPTCLHHNPCHALGDLVGIKKHFRRKH), and 148–175 (WICERCSKGYAVQSDYKAHLKTCGTRGH). 8 residues coordinate Zn(2+): C150, C153, H166, C170, C177, C179, H192, and C196. The segment at 175–198 (HSCDCGRVFSRVESFIEHQDTCTV) adopts a CCHC-type 2; atypical zinc-finger fold. An SHR-binding region spans residues 185 to 197 (RVESFIEHQDTCT). 2 disordered regions span residues 200–259 (RSQP…PSTL) and 298–318 (SEVEKKSYEKGETSLEREEAR). Composition is skewed to low complexity over residues 213–230 (QHTTNATQTASTAENNEN) and 246–259 (RRQSPPSEQQPSTL). Positions 313–349 (EREEARRETKRQIEIAELEFAEAKRIRQHARAELHKA) form a coiled coil.

Homo- and heterodimer of IDD14alpha and IDD14beta. Expressed in cotyledons and the vasculature of reosette leaves. Weak expression in hypocotyls and floral organs, but not detected in roots and inflorescence stems.

It localises to the nucleus. Its function is as follows. Transcription factor regulating starch metabolism by binding directly to the promoter of QQS. The IDD14beta isoform attenuates the transcription factor activity by competitively forming heterodimers with reduced DNA-binding capacity. Regulates lateral organ morphogenesis and gravitropic responses. Has a redundant role with IDD16 in directing leaf and floral organ morphogenesis. Involved in the establishment of auxin gradients through the regulation of auxin biosynthesis and transport. The protein is Protein indeterminate-domain 14 of Arabidopsis thaliana (Mouse-ear cress).